The chain runs to 156 residues: ATP synthase subunit b (156 aa).

Residues 7–27 (LIGELIAFTVFVLFCMKFVWP) form a helical membrane-spanning segment.

Belongs to the ATPase B chain family. As to quaternary structure, F-type ATPases have 2 components, F(1) - the catalytic core - and F(0) - the membrane proton channel. F(1) has five subunits: alpha(3), beta(3), gamma(1), delta(1), epsilon(1). F(0) has three main subunits: a(1), b(2) and c(10-14). The alpha and beta chains form an alternating ring which encloses part of the gamma chain. F(1) is attached to F(0) by a central stalk formed by the gamma and epsilon chains, while a peripheral stalk is formed by the delta and b chains.

The protein localises to the cell inner membrane. Functionally, f(1)F(0) ATP synthase produces ATP from ADP in the presence of a proton or sodium gradient. F-type ATPases consist of two structural domains, F(1) containing the extramembraneous catalytic core and F(0) containing the membrane proton channel, linked together by a central stalk and a peripheral stalk. During catalysis, ATP synthesis in the catalytic domain of F(1) is coupled via a rotary mechanism of the central stalk subunits to proton translocation. Its function is as follows. Component of the F(0) channel, it forms part of the peripheral stalk, linking F(1) to F(0). This chain is ATP synthase subunit b, found in Pseudoalteromonas translucida (strain TAC 125).